The sequence spans 174 residues: B3 domain-containing protein At3g06220 (174 aa).

Positions 8–101 (PRFYTVFLSC…SYEVSIYGRG (94 aa)) form a DNA-binding region, TF-B3. Positions 114–174 (EISDESESDN…ISDASDSDYY (61 aa)) are disordered. Composition is skewed to acidic residues over residues 139 to 150 (ENSDDTEGDNDS) and 164 to 174 (EISDASDSDYY).

It is found in the nucleus. This chain is B3 domain-containing protein At3g06220, found in Arabidopsis thaliana (Mouse-ear cress).